A 746-amino-acid polypeptide reads, in one-letter code: Hyperosmolality-gated Ca2+ permeable channel 2.1 (746 aa).

The next 10 helical transmembrane spans lie at 3-23 (ISAL…LLSL), 90-110 (MVIF…AFVL), 144-164 (LWVH…LLYF), 357-377 (IATL…VTFI), 405-425 (VITG…VPPL), 445-465 (ACIK…ILSG), 492-512 (AGFF…CEIM), 560-580 (VIAP…YLIY), 601-621 (IFHN…LGFF), and 623-643 (LKLS…TLLF). Polar residues predominate over residues 692–702 (LHSQKSSSKAE). The tract at residues 692 to 723 (LHSQKSSSKAECSNPFKKQELPDPEKLKPEEG) is disordered. Positions 708–723 (KKQELPDPEKLKPEEG) are enriched in basic and acidic residues.

Belongs to the CSC1 (TC 1.A.17) family.

The protein resides in the membrane. Acts as an osmosensitive calcium-permeable cation channel. This is Hyperosmolality-gated Ca2+ permeable channel 2.1 from Arabidopsis thaliana (Mouse-ear cress).